The sequence spans 46 residues: Defensin Tk-AMP-D6 (46 aa).

4 cysteine pairs are disulfide-bonded: Cys-3-Cys-46, Cys-14-Cys-34, Cys-20-Cys-40, and Cys-24-Cys-42.

Functionally, plant defense peptide. The protein is Defensin Tk-AMP-D6 of Triticum kiharae (Wheat).